The chain runs to 276 residues: Formamidopyrimidine-DNA glycosylase (276 aa).

The active-site Schiff-base intermediate with DNA is P2. E3 functions as the Proton donor in the catalytic mechanism. K58 (proton donor; for beta-elimination activity) is an active-site residue. DNA is bound by residues H92, R111, and K154. The FPG-type zinc finger occupies 239–273 (QVYGHAGEECNNCGTILEKIKVNGRGTTFCPHCQV). The active-site Proton donor; for delta-elimination activity is R263.

The protein belongs to the FPG family. Monomer. Requires Zn(2+) as cofactor.

It carries out the reaction Hydrolysis of DNA containing ring-opened 7-methylguanine residues, releasing 2,6-diamino-4-hydroxy-5-(N-methyl)formamidopyrimidine.. The enzyme catalyses 2'-deoxyribonucleotide-(2'-deoxyribose 5'-phosphate)-2'-deoxyribonucleotide-DNA = a 3'-end 2'-deoxyribonucleotide-(2,3-dehydro-2,3-deoxyribose 5'-phosphate)-DNA + a 5'-end 5'-phospho-2'-deoxyribonucleoside-DNA + H(+). In terms of biological role, involved in base excision repair of DNA damaged by oxidation or by mutagenic agents. Acts as a DNA glycosylase that recognizes and removes damaged bases. Has a preference for oxidized purines, such as 7,8-dihydro-8-oxoguanine (8-oxoG). Has AP (apurinic/apyrimidinic) lyase activity and introduces nicks in the DNA strand. Cleaves the DNA backbone by beta-delta elimination to generate a single-strand break at the site of the removed base with both 3'- and 5'-phosphates. In Lactobacillus johnsonii (strain CNCM I-12250 / La1 / NCC 533), this protein is Formamidopyrimidine-DNA glycosylase.